A 137-amino-acid polypeptide reads, in one-letter code: Secreted RxLR effector protein 67 (137 aa).

Positions 1-18 (MRLYILVLAAIAVTLVFA) are cleaved as a signal peptide. The RxLR-dEER signature appears at 32–61 (RALRQASITDEKSDDSLNAQAPPLSKSEKR). Residues 40 to 65 (TDEKSDDSLNAQAPPLSKSEKRLSRS) are disordered. Residues 114-134 (WFVRMILEAGIFWAVFHCLSA) traverse the membrane as a helical segment.

It belongs to the RxLR effector family.

The protein resides in the secreted. Its subcellular location is the host cytoplasm. It is found in the host nucleus. The protein localises to the membrane. Its function is as follows. Effector that partially suppresses the tobacco programmed cell death induced by cell death-inducing proteins. The chain is Secreted RxLR effector protein 67 from Plasmopara viticola (Downy mildew of grapevine).